The chain runs to 3415 residues: Genome polyprotein (3415 aa).

Residues 1–29 (MMTTSKGKGGGPPRRKLKVTANKSRPATS) are disordered. The Cytoplasmic portion of the chain corresponds to 1-96 (MMTTSKGKGG…LHMRGRRRSG (96 aa)). Residues 95–115 (SGVDWTWIFLTMALMTMAMAT) constitute a propeptide, ER anchor for the capsid protein C, removed in mature form by serine protease NS3. A helical membrane pass occupies residues 97 to 117 (VDWTWIFLTMALMTMAMATTI). Residues 118 to 243 (HRDREGYMVM…RVEGWMWKNK (126 aa)) are Extracellular-facing. Asparagine 142 is a glycosylation site (N-linked (GlcNAc...) asparagine; by host). The helical transmembrane segment at 244-260 (LLTAAIVALAWLMVDSW) threads the bilayer. Position 261 (methionine 261) is a topological domain, cytoplasmic. Residues 262 to 278 (ARVTVILLALSLGPVYA) form a helical membrane-spanning segment. Over 279 to 726 (TRCTHLENRD…HTVLGGAFNT (448 aa)) the chain is Extracellular. 6 cysteine pairs are disulfide-bonded: cysteine 281/cysteine 308, cysteine 338/cysteine 394, cysteine 338/cysteine 399, cysteine 352/cysteine 383, cysteine 370/cysteine 394, and cysteine 370/cysteine 399. The interval 376–389 (DRGWGNHCGFFGKG) is fusion peptide. N-linked (GlcNAc...) asparagine; by host glycosylation is present at asparagine 432. 2 disulfides stabilise this stretch: cysteine 464/cysteine 568 and cysteine 585/cysteine 617. Residues 727–747 (LFGGVGFIPKMLLGVALVWLG) form a helical membrane-spanning segment. Residues 748–754 (LNARNPT) are Cytoplasmic-facing. The chain crosses the membrane as a helical span at residues 755–775 (MSMTFLAVGALTLMMTMGVGA). The Extracellular portion of the chain corresponds to 776-1187 (DYGCAIDPER…LVRVEEIVRY (412 aa)). 6 disulfide bridges follow: cysteine 779–cysteine 790, cysteine 830–cysteine 920, cysteine 955–cysteine 1000, cysteine 1057–cysteine 1106, cysteine 1068–cysteine 1090, and cysteine 1089–cysteine 1093. Asparagine 860, asparagine 983, and asparagine 999 each carry an N-linked (GlcNAc...) asparagine; by host glycan. Residues 1188 to 1208 (VIAVGVTFHLELGPETMVLVM) form a helical membrane-spanning segment. Residues 1209–1233 (LQAVFNMRTCYLMGFLVKRVITTRE) are Cytoplasmic-facing. A helical membrane pass occupies residues 1234–1253 (VVTVYFLLLVLEMGIPEMNF). Position 1254 (glycine 1254) is a topological domain, lumenal. A helical membrane pass occupies residues 1255-1275 (HLWEWADALAMGLLIIKASAM). The Cytoplasmic segment spans residues 1276–1292 (EDRRGLGFLLAGLMTQR). A helical membrane pass occupies residues 1293–1313 (HLVAVHHGLMVFLTVALAVVG). At 1314 to 1327 (RNIYNGQKERKGLC) the chain is on the lumenal side. The helical transmembrane segment at 1328-1348 (FTVPLASLLGGSGSGLRMLAL) threads the bilayer. Over 1349–1359 (WECLGGRGRRS) the chain is Cytoplasmic. The chain crosses the membrane as a helical span at residues 1360-1378 (LSEPLTVVGVMLAMASGLL). Over 1379–1382 (RHSS) the chain is Lumenal. Residues 1383–1403 (QEALLALSAGSFLILMLILGT) form a helical membrane-spanning segment. Residues 1404–1452 (RRLQLTAEWAGVVEWNPELVNEGGEVSLKVRQDAMGNLHLTEVEREERR) lie on the Cytoplasmic side of the membrane. The segment at 1410–1449 (AEWAGVVEWNPELVNEGGEVSLKVRQDAMGNLHLTEVERE) is interacts with and activates NS3 protease. The segment at residues 1453–1473 (LALWLVFGLLASAYHWSGILV) is an intramembrane region (helical). The Cytoplasmic segment spans residues 1474-2163 (TMGAWTVYEL…AERDAPEAML (690 aa)). The region spanning 1490–1669 (TDLVFSGQLP…NVEKSRPEMP (180 aa)) is the Peptidase S7 domain. Active-site charge relay system; for serine protease NS3 activity residues include histidine 1543, aspartate 1567, and serine 1627. Positions 1675 to 1832 (GKWTSKGSIT…ESKGAIVSEE (158 aa)) constitute a Helicase ATP-binding domain. ATP is bound at residue 1688 to 1695 (MHPGSGKT). The DEAH box signature appears at 1780-1783 (DEAH). The Helicase C-terminal domain maps to 1842-2001 (DGFDWITEFE…TVRGPVATFY (160 aa)). The residue at position 1884 (lysine 1884) is an N6-acetyllysine; by host. Residues 2164–2184 (TLLEVAVLGIATLGVVWCFIV) traverse the membrane as a helical segment. Residues 2185 to 2190 (RTSVSR) are Lumenal-facing. An intramembrane region (helical) is located at residues 2191 to 2210 (MVLGTLVLAVALILLWLGGM). Residue aspartate 2211 is a topological domain, lumenal. The helical transmembrane segment at 2212-2232 (YGTMAGVALIFYLLLTVLQPE) threads the bilayer. Residues 2233-2243 (PGKQRSGEDNR) lie on the Cytoplasmic side of the membrane. Residues 2244–2264 (LAFLLIGLGSVVGLVAANELG) form a helical membrane-spanning segment. The Lumenal segment spans residues 2265–2300 (YLEQTKTDISGLFRREDQGGMVWDAWTNIDIQPARS). Residues 2301–2321 (WGTYVLIVSLFTPYMLHQLQT) constitute an intramembrane region (helical). Residues 2322 to 2344 (KIQRLVNSSVAAGTQAMRDLGGG) lie on the Lumenal side of the membrane. The segment at residues 2345–2365 (TPFFGVAGHVVALGVTSLVGA) is an intramembrane region (helical). Residues 2366-2369 (TPTS) lie on the Lumenal side of the membrane. Residues 2370–2390 (LALGVALAALHLAVVTSGLEA) form a helical membrane-spanning segment. Residues 2391–2433 (ELTQRAHRAFFSAMVKNPMVDGEIINPIPDGDPKPALYERKMS) lie on the Cytoplasmic side of the membrane. A helical membrane pass occupies residues 2434–2454 (LFLAIGLCIAAVALNRTAAAM). At 2455–2479 (TEAGAVAVAALGQLLRPEEESWWTM) the chain is on the lumenal side. A helical membrane pass occupies residues 2480–2500 (PMACGMAGLVRGSLWGLLPVL). Over 2501–3415 (HRIWLRTQGA…WELKLESSII (915 aa)) the chain is Cytoplasmic. Residues 2513–2777 (GGAEGSTLGD…EIDLGTGTRC (265 aa)) enclose the mRNA cap 0-1 NS5-type MT domain. Residue serine 2568 participates in S-adenosyl-L-methionine binding. Residue serine 2568 is modified to Phosphoserine. The active-site For 2'-O-MTase activity is lysine 2573. Residues glycine 2598, tryptophan 2599, threonine 2616, isoleucine 2617, aspartate 2643, and valine 2644 each coordinate S-adenosyl-L-methionine. Aspartate 2658 acts as the For 2'-O-MTase activity in catalysis. Residue isoleucine 2659 coordinates S-adenosyl-L-methionine. Residues lysine 2695 and glutamate 2731 each act as for 2'-O-MTase activity in the active site. The tract at residues 2731-2735 (EMYYS) is interaction with host SCRIB. Tyrosine 2733 lines the S-adenosyl-L-methionine pocket. Zn(2+) is bound by residues glutamate 2951, histidine 2955, cysteine 2960, and cysteine 2963. The region spanning 3041-3190 (GKLYADDTAG…KPIDDRFGKA (150 aa)) is the RdRp catalytic domain. Residues histidine 3225, cysteine 3241, and cysteine 3360 each contribute to the Zn(2+) site.

This sequence in the N-terminal section; belongs to the class I-like SAM-binding methyltransferase superfamily. mRNA cap 0-1 NS5-type methyltransferase family. In terms of assembly, homodimer. Interacts (via N-terminus) with host EXOC1 (via C-terminus); this interaction results in EXOC1 degradation through the proteasome degradation pathway. As to quaternary structure, forms heterodimers with envelope protein E in the endoplasmic reticulum and Golgi. Homodimer; in the endoplasmic reticulum and Golgi. In terms of assembly, forms homodimers as well as homohexamers. NS1 may interact with NS4A. As to quaternary structure, forms a heterodimer with serine protease NS3. May form homooligomers. Forms a heterodimer with NS2B. Interacts with NS4B. Interacts with unphosphorylated RNA-directed RNA polymerase NS5; this interaction stimulates RNA-directed RNA polymerase NS5 guanylyltransferase activity. In terms of assembly, interacts with serine protease NS3. As to quaternary structure, interacts with host STAT2; this interaction inhibits the phosphorylation of the latter, and, when all viral proteins are present (polyprotein), targets STAT2 for degradation. Post-translationally, specific enzymatic cleavages in vivo yield mature proteins. Cleavages in the lumen of endoplasmic reticulum are performed by host signal peptidase, whereas cleavages in the cytoplasmic side are performed by serine protease NS3. Signal cleavage at the 2K-4B site requires a prior NS3 protease-mediated cleavage at the 4A-2K site. Cleaved in post-Golgi vesicles by a host furin, releasing the mature small envelope protein M, and peptide pr. This cleavage is incomplete as up to 30% of viral particles still carry uncleaved prM. In terms of processing, N-glycosylated. Post-translationally, N-glycosylated. The excreted form is glycosylated and this is required for efficient secretion of the protein from infected cells. Acetylated by host KAT5. Acetylation modulates NS3 RNA-binding and unwinding activities and plays an important positive role for viral replication. In terms of processing, phosphorylated on serines residues. This phosphorylation may trigger NS5 nuclear localization.

Its subcellular location is the virion. It localises to the host nucleus. The protein resides in the host cytoplasm. It is found in the host perinuclear region. The protein localises to the secreted. Its subcellular location is the virion membrane. It localises to the host endoplasmic reticulum membrane. It carries out the reaction Selective hydrolysis of -Xaa-Xaa-|-Yaa- bonds in which each of the Xaa can be either Arg or Lys and Yaa can be either Ser or Ala.. It catalyses the reaction RNA(n) + a ribonucleoside 5'-triphosphate = RNA(n+1) + diphosphate. The enzyme catalyses a ribonucleoside 5'-triphosphate + H2O = a ribonucleoside 5'-diphosphate + phosphate + H(+). The catalysed reaction is ATP + H2O = ADP + phosphate + H(+). It carries out the reaction a 5'-end (5'-triphosphoguanosine)-ribonucleoside in mRNA + S-adenosyl-L-methionine = a 5'-end (N(7)-methyl 5'-triphosphoguanosine)-ribonucleoside in mRNA + S-adenosyl-L-homocysteine. It catalyses the reaction a 5'-end (N(7)-methyl 5'-triphosphoguanosine)-ribonucleoside in mRNA + S-adenosyl-L-methionine = a 5'-end (N(7)-methyl 5'-triphosphoguanosine)-(2'-O-methyl-ribonucleoside) in mRNA + S-adenosyl-L-homocysteine + H(+). In terms of biological role, plays a role in virus budding by binding to the cell membrane and gathering the viral RNA into a nucleocapsid that forms the core of a mature virus particle. During virus entry, may induce genome penetration into the host cytoplasm after hemifusion induced by the surface proteins. Can migrate to the cell nucleus where it modulates host functions. Functionally, inhibits RNA silencing by interfering with host Dicer. Prevents premature fusion activity of envelope proteins in trans-Golgi by binding to envelope protein E at pH6.0. After virion release in extracellular space, gets dissociated from E dimers. Its function is as follows. Acts as a chaperone for envelope protein E during intracellular virion assembly by masking and inactivating envelope protein E fusion peptide. prM is the only viral peptide matured by host furin in the trans-Golgi network probably to avoid catastrophic activation of the viral fusion activity in acidic Golgi compartment prior to virion release. prM-E cleavage is inefficient, and many virions are only partially matured. These uncleaved prM would play a role in immune evasion. In terms of biological role, may play a role in virus budding. Exerts cytotoxic effects by activating a mitochondrial apoptotic pathway through M ectodomain. May display a viroporin activity. Functionally, binds to host cell surface receptor and mediates fusion between viral and cellular membranes. Envelope protein is synthesized in the endoplasmic reticulum in the form of heterodimer with protein prM. They play a role in virion budding in the ER, and the newly formed immature particle is covered with 60 spikes composed of heterodimer between precursor prM and envelope protein E. The virion is transported to the Golgi apparatus where the low pH causes dissociation of PrM-E heterodimers and formation of E homodimers. prM-E cleavage is inefficient, and many virions are only partially matured. These uncleaved prM would play a role in immune evasion. Involved in immune evasion, pathogenesis and viral replication. Once cleaved off the polyprotein, is targeted to three destinations: the viral replication cycle, the plasma membrane and the extracellular compartment. Essential for viral replication. Required for formation of the replication complex and recruitment of other non-structural proteins to the ER-derived membrane structures. Excreted as a hexameric lipoparticle that plays a role against host immune response. Antagonizing the complement function. Binds to the host macrophages and dendritic cells. Inhibits signal transduction originating from Toll-like receptor 3 (TLR3). Its function is as follows. Component of the viral RNA replication complex that functions in virion assembly and antagonizes the host immune response. In terms of biological role, required cofactor for the serine protease function of NS3. May have membrane-destabilizing activity and form viroporins. Functionally, displays three enzymatic activities: serine protease, NTPase and RNA helicase. NS3 serine protease, in association with NS2B, performs its autocleavage and cleaves the polyprotein at dibasic sites in the cytoplasm: C-prM, NS2A-NS2B, NS2B-NS3, NS3-NS4A, NS4A-2K and NS4B-NS5. NS3 RNA helicase binds RNA and unwinds dsRNA in the 3' to 5' direction. Regulates the ATPase activity of the NS3 helicase activity. NS4A allows NS3 helicase to conserve energy during unwinding. Its function is as follows. Functions as a signal peptide for NS4B and is required for the interferon antagonism activity of the latter. In terms of biological role, induces the formation of ER-derived membrane vesicles where the viral replication takes place. Inhibits interferon (IFN)-induced host STAT1 phosphorylation and nuclear translocation, thereby preventing the establishment of cellular antiviral state by blocking the IFN-alpha/beta pathway. Inhibits STAT2 translocation in the nucleus after IFN-alpha treatment. Functionally, replicates the viral (+) and (-) RNA genome, and performs the capping of genomes in the cytoplasm. NS5 methylates viral RNA cap at guanine N-7 and ribose 2'-O positions. Besides its role in RNA genome replication, also prevents the establishment of cellular antiviral state by blocking the interferon-alpha/beta (IFN-alpha/beta) signaling pathway. Inhibits host TYK2 and STAT2 phosphorylation, thereby preventing activation of JAK-STAT signaling pathway. This Tick-borne powassan virus (strain LB) (POWV) protein is Genome polyprotein.